A 188-amino-acid polypeptide reads, in one-letter code: MIKTVYVTGYKSFELNIFKDDAPEVSYLKKFIEHKLKQLIEEGLEWVLIQGQMGIELWTAEVVLALKATYPDLKLGIITPFYGHIDRWNEQNQAKYNHIAHHADFVDSVFHSSYEGPHQFKQTDQFMLAHSDTTLLIYDEEQEASPKFFKQMLVDFMEKTNYTCDIVTFDELTEFINDLQWSQEQSFE.

The protein belongs to the UPF0398 family.

The sequence is that of UPF0398 protein SSP1297 from Staphylococcus saprophyticus subsp. saprophyticus (strain ATCC 15305 / DSM 20229 / NCIMB 8711 / NCTC 7292 / S-41).